The sequence spans 227 residues: UPF0173 metal-dependent hydrolase BC_4613 (227 aa).

This sequence belongs to the UPF0173 family.

The protein is UPF0173 metal-dependent hydrolase BC_4613 of Bacillus cereus (strain ATCC 14579 / DSM 31 / CCUG 7414 / JCM 2152 / NBRC 15305 / NCIMB 9373 / NCTC 2599 / NRRL B-3711).